The primary structure comprises 205 residues: Glutathione peroxidase 1 (205 aa).

Residue serine 37 is modified to Phosphoserine. Residue selenocysteine 52 is part of the active site. Residue selenocysteine 52 is a non-standard amino acid, selenocysteine. N6-acetyllysine; alternate is present on residues lysine 91 and lysine 117. 2 positions are modified to N6-succinyllysine; alternate: lysine 91 and lysine 117. Residue lysine 117 is glycosylated (N-linked (Glc) (glycation) lysine; in vitro). Lysine 124 is subject to N6-acetyllysine. Residue lysine 151 is modified to N6-acetyllysine; alternate. Lysine 151 is modified (N6-succinyllysine; alternate). Residues serine 200 and serine 204 each carry the phosphoserine modification.

Belongs to the glutathione peroxidase family. As to quaternary structure, homotetramer. Interacts with MIEN1. Post-translationally, during periods of oxidative stress, Sec-52 may react with a superoxide radical, irreversibly lose hydroselenide and be converted to dehydroalanine.

It is found in the cytoplasm. The protein localises to the mitochondrion. It carries out the reaction 2 glutathione + H2O2 = glutathione disulfide + 2 H2O. The enzyme catalyses a hydroperoxy polyunsaturated fatty acid + 2 glutathione = a hydroxy polyunsaturated fatty acid + glutathione disulfide + H2O. It catalyses the reaction tert-butyl hydroperoxide + 2 glutathione = tert-butanol + glutathione disulfide + H2O. The catalysed reaction is cumene hydroperoxide + 2 glutathione = 2-phenylpropan-2-ol + glutathione disulfide + H2O. It carries out the reaction (13S)-hydroperoxy-(9Z,11E)-octadecadienoate + 2 glutathione = (13S)-hydroxy-(9Z,11E)-octadecadienoate + glutathione disulfide + H2O. The enzyme catalyses (9S)-hydroperoxy-(10E,12Z)-octadecadienoate + 2 glutathione = (9S)-hydroxy-(10E,12Z)-octadecadienoate + glutathione disulfide + H2O. It catalyses the reaction (5S)-hydroperoxy-(6E,8Z,11Z,14Z)-eicosatetraenoate + 2 glutathione = (5S)-hydroxy-(6E,8Z,11Z,14Z)-eicosatetraenoate + glutathione disulfide + H2O. The catalysed reaction is (12S)-hydroperoxy-(5Z,8Z,10E,14Z)-eicosatetraenoate + 2 glutathione = (12S)-hydroxy-(5Z,8Z,10E,14Z)-eicosatetraenoate + glutathione disulfide + H2O. It carries out the reaction (12R)-hydroperoxy-(5Z,8Z,10E,14Z)-eicosatetraenoate + 2 glutathione = (12R)-hydroxy-(5Z,8Z,10E,14Z)-eicosatetraenoate + glutathione disulfide + H2O. The enzyme catalyses (15S)-hydroperoxy-(5Z,8Z,11Z,13E)-eicosatetraenoate + 2 glutathione = (15S)-hydroxy-(5Z,8Z,11Z,13E)-eicosatetraenoate + glutathione disulfide + H2O. It catalyses the reaction (5S)-hydroperoxy-(6E,8Z,11Z,14Z,17Z)-eicosapentaenoate + 2 glutathione = (5S)-hydroxy-(6E,8Z,11Z,14Z,17Z)-eicosapentaenoate + glutathione disulfide + H2O. The catalysed reaction is (15S)-hydroperoxy-(5Z,8Z,11Z,13E,17Z)-eicosapentaenoate + 2 glutathione = (15S)-hydroxy-(5Z,8Z,11Z,13E,17Z)-eicosapentaenoate + glutathione disulfide + H2O. It carries out the reaction (15S)-hydroperoxy-(11Z,13E)-eicosadienoate + 2 glutathione = (15S)-hydroxy-(11Z,13E)-eicosadienoate + glutathione disulfide + H2O. The enzyme catalyses (17S)-hydroperoxy-(4Z,7Z,10Z,13Z,15E,19Z)-docosahexaenoate + 2 glutathione = (17S)-hydroxy-(4Z,7Z,10Z,13Z,15E,19Z)-docosahexaenoate + glutathione disulfide + H2O. In terms of biological role, catalyzes the reduction of hydroperoxides in a glutathione-dependent manner thus regulating cellular redox homeostasis. Can reduce small soluble hydroperoxides such as H2O2, cumene hydroperoxide and tert-butyl hydroperoxide, as well as several fatty acid-derived hydroperoxides. In platelets catalyzes the reduction of 12-hydroperoxyeicosatetraenoic acid, the primary product of the arachidonate 12-lipoxygenase pathway. The polypeptide is Glutathione peroxidase 1 (GPX1) (Bos taurus (Bovine)).